The sequence spans 517 residues: Crotonobetaine/carnitine--CoA ligase (517 aa).

It belongs to the ATP-dependent AMP-binding enzyme family.

It carries out the reaction 4-(trimethylamino)butanoate + ATP + CoA = 4-(trimethylamino)butanoyl-CoA + AMP + diphosphate. It catalyses the reaction crotonobetaine + ATP + CoA = crotonobetainyl-CoA + AMP + diphosphate. The enzyme catalyses (R)-carnitine + ATP + CoA = (R)-carnitinyl-CoA + AMP + diphosphate. Its pathway is amine and polyamine metabolism; carnitine metabolism. Catalyzes the transfer of CoA to carnitine, generating the initial carnitinyl-CoA needed for the CaiB reaction cycle. Also has activity toward crotonobetaine and gamma-butyrobetaine. The protein is Crotonobetaine/carnitine--CoA ligase of Escherichia coli (strain SE11).